The sequence spans 286 residues: 4-hydroxybenzoate octaprenyltransferase (286 aa).

7 helical membrane-spanning segments follow: residues 20 to 40 (IGTLLLMWPCLMALVLAAGGM), 43 to 63 (LKVLVIFIIGVVVMRACGCII), 96 to 116 (LFVVMGLIAFGLVLMLNPLVV), 142 to 162 (FLGVVWSWSIPMAYAAQTGTV), 167 to 187 (WWLFAANWCWTVAYDTMYAMV), 210 to 230 (QVIALFQLAALACFIIAGWAA), and 234 to 254 (LVYALGIITFVGFSLYQQKLI).

This sequence belongs to the UbiA prenyltransferase family. The cofactor is Mg(2+).

It is found in the cell inner membrane. The enzyme catalyses all-trans-octaprenyl diphosphate + 4-hydroxybenzoate = 4-hydroxy-3-(all-trans-octaprenyl)benzoate + diphosphate. Its pathway is cofactor biosynthesis; ubiquinone biosynthesis. Its function is as follows. Catalyzes the prenylation of para-hydroxybenzoate (PHB) with an all-trans polyprenyl group. Mediates the second step in the final reaction sequence of ubiquinone-8 (UQ-8) biosynthesis, which is the condensation of the polyisoprenoid side chain with PHB, generating the first membrane-bound Q intermediate 3-octaprenyl-4-hydroxybenzoate. This is 4-hydroxybenzoate octaprenyltransferase from Shewanella woodyi (strain ATCC 51908 / MS32).